Consider the following 448-residue polypeptide: Zinc finger and BTB domain-containing protein 44 (448 aa).

Residues 31–98 enclose the BTB domain; that stretch reads CDITIRVQDK…AYTATLSINT (68 aa). Over residues 289 to 298 the composition is skewed to basic and acidic residues; the sequence is LSDEEVHEEV. The interval 289–320 is disordered; that stretch reads LSDEEVHEEVSQPVSASQSSMSDQQTVPGSEQ. Positions 299–313 are enriched in low complexity; that stretch reads SQPVSASQSSMSDQQ. 2 C2H2-type zinc fingers span residues 394-416 and 422-444; these read FQCP…MLIH and FQCD…RLKH.

Its subcellular location is the nucleus. The sequence is that of Zinc finger and BTB domain-containing protein 44 (zbtb44) from Xenopus tropicalis (Western clawed frog).